The sequence spans 563 residues: Putative GMC-type oxidoreductase L128 (563 aa).

The N-terminal stretch at 1-21 (MTSSIVLKFFLIATLLVIANS) is a signal peptide. 48–77 (DYVIVGGGAAGSVLLDKCISYGYKCTLIER) lines the FAD pocket. Histidine 504 serves as the catalytic Proton acceptor.

Belongs to the GMC oxidoreductase family. It depends on FAD as a cofactor.

This Acanthamoeba polyphaga mimivirus (APMV) protein is Putative GMC-type oxidoreductase L128.